The chain runs to 148 residues: 3-dehydroquinate dehydratase (148 aa).

The active-site Proton acceptor is the tyrosine 23. The substrate site is built by asparagine 74, histidine 80, and aspartate 87. The active-site Proton donor is the histidine 100. Residues isoleucine 101 to serine 102 and arginine 111 each bind substrate.

This sequence belongs to the type-II 3-dehydroquinase family. Homododecamer.

The enzyme catalyses 3-dehydroquinate = 3-dehydroshikimate + H2O. Its pathway is metabolic intermediate biosynthesis; chorismate biosynthesis; chorismate from D-erythrose 4-phosphate and phosphoenolpyruvate: step 3/7. In terms of biological role, catalyzes a trans-dehydration via an enolate intermediate. The chain is 3-dehydroquinate dehydratase from Caldanaerobacter subterraneus subsp. tengcongensis (strain DSM 15242 / JCM 11007 / NBRC 100824 / MB4) (Thermoanaerobacter tengcongensis).